A 115-amino-acid chain; its full sequence is Probable non-functional T cell receptor beta variable 7-3 (115 aa).

Positions 1–21 (MGTRLLCWAALCLLGADHTGA) are cleaved as a signal peptide. The Ig-like domain occupies 22-115 (GVSQTPSNKV…SAAYLRASSL (94 aa)).

In terms of assembly, most probably, the alpha-beta TR is not assembled due to incorrect folding of the beta chain. Alpha-beta TR is a heterodimer composed of an alpha and beta chain; disulfide-linked. The alpha-beta TR is associated with the transmembrane signaling CD3 coreceptor proteins to form the TR-CD3 (TcR or TCR). The assembly of alpha-beta TR heterodimers with CD3 occurs in the endoplasmic reticulum where a single alpha-beta TR heterodimer associates with one CD3D-CD3E heterodimer, one CD3G-CD3E heterodimer and one CD247 homodimer forming a stable octameric structure. CD3D-CD3E and CD3G-CD3E heterodimers preferentially associate with TR alpha and TR beta chains, respectively. The association of the CD247 homodimer is the last step of TcR assembly in the endoplasmic reticulum and is required for transport to the cell surface.

Its subcellular location is the cell membrane. Functionally, probable non-functional open reading frame (ORF) of V region of the variable domain of T cell receptor (TR) beta chain. Non-functional ORF generally cannot participate in the synthesis of a productive T cell receptor (TR) chain due to altered V-(D)-J or switch recombination and/or splicing site (at mRNA level) and/or conserved amino acid change (protein level). Alpha-beta T cell receptors are antigen specific receptors which are essential to the immune response and are present on the cell surface of T lymphocytes. Recognize peptide-major histocompatibility (MH) (pMH) complexes that are displayed by antigen presenting cells (APC), a prerequisite for efficient T cell adaptive immunity against pathogens. Binding of alpha-beta TR to pMH complex initiates TR-CD3 clustering on the cell surface and intracellular activation of LCK that phosphorylates the ITAM motifs of CD3G, CD3D, CD3E and CD247 enabling the recruitment of ZAP70. In turn ZAP70 phosphorylates LAT, which recruits numerous signaling molecules to form the LAT signalosome. The LAT signalosome propagates signal branching to three major signaling pathways, the calcium, the mitogen-activated protein kinase (MAPK) kinase and the nuclear factor NF-kappa-B (NF-kB) pathways, leading to the mobilization of transcription factors that are critical for gene expression and essential for T cell growth and differentiation. The T cell repertoire is generated in the thymus, by V-(D)-J rearrangement. This repertoire is then shaped by intrathymic selection events to generate a peripheral T cell pool of self-MH restricted, non-autoaggressive T cells. Post-thymic interaction of alpha-beta TR with the pMH complexes shapes TR structural and functional avidity. This is Probable non-functional T cell receptor beta variable 7-3 from Homo sapiens (Human).